A 1479-amino-acid chain; its full sequence is Putative receptor-type tyrosine-protein phosphatase mosPTP-1 (1479 aa).

The N-terminal stretch at 1–28 (MKPRLLTTVTTWLALVLPVVYLSRPCQA) is a signal peptide. Residues 29–365 (LPTVNFTANY…RQSYNDYNLA (337 aa)) lie on the Extracellular side of the membrane. 7 N-linked (GlcNAc...) asparagine glycosylation sites follow: Asn-33, Asn-40, Asn-146, Asn-182, Asn-248, Asn-294, and Asn-306. 2 Fibronectin type-III domains span residues 143–242 (KPLN…AGPS) and 243–346 (APKV…VQLN). A helical membrane pass occupies residues 366 to 386 (VMIGILICCFGLLFIVLTILL). Residues 387 to 1479 (WKKCFHAAYY…AKLRAVVRVE (1093 aa)) lie on the Cytoplasmic side of the membrane. 2 consecutive Tyrosine-protein phosphatase domains span residues 452–717 (FSKE…LVEA) and 740–992 (IDSQ…LSYM). Residue Cys-658 is the Phosphocysteine intermediate of the active site.

The protein belongs to the protein-tyrosine phosphatase family. Receptor class subfamily. As to quaternary structure, interacts with C-type lectin mosGCTL-1. Interacts with C-type lectin mosGCTL-7.

The protein resides in the cell membrane. The enzyme catalyses O-phospho-L-tyrosyl-[protein] + H2O = L-tyrosyl-[protein] + phosphate. In terms of biological role, putative protein tyrosine-protein phosphatase. (Microbial infection) Facilitates West Nile virus infection in mosquitoes. This is Putative receptor-type tyrosine-protein phosphatase mosPTP-1 from Culex quinquefasciatus (Southern house mosquito).